The following is a 569-amino-acid chain: Proline--tRNA ligase (569 aa).

It belongs to the class-II aminoacyl-tRNA synthetase family. ProS type 1 subfamily. As to quaternary structure, homodimer.

It localises to the cytoplasm. It carries out the reaction tRNA(Pro) + L-proline + ATP = L-prolyl-tRNA(Pro) + AMP + diphosphate. Its function is as follows. Catalyzes the attachment of proline to tRNA(Pro) in a two-step reaction: proline is first activated by ATP to form Pro-AMP and then transferred to the acceptor end of tRNA(Pro). As ProRS can inadvertently accommodate and process non-cognate amino acids such as alanine and cysteine, to avoid such errors it has two additional distinct editing activities against alanine. One activity is designated as 'pretransfer' editing and involves the tRNA(Pro)-independent hydrolysis of activated Ala-AMP. The other activity is designated 'posttransfer' editing and involves deacylation of mischarged Ala-tRNA(Pro). The misacylated Cys-tRNA(Pro) is not edited by ProRS. In Shewanella woodyi (strain ATCC 51908 / MS32), this protein is Proline--tRNA ligase.